A 382-amino-acid polypeptide reads, in one-letter code: Heme A synthase (382 aa).

A run of 8 helical transmembrane segments spans residues 25 to 45, 112 to 132, 138 to 158, 176 to 196, 211 to 231, 270 to 290, 303 to 323, and 327 to 347; these read GAVR…VAVG, LLGR…WARG, LLLG…IGWI, LALH…LAAG, VVAG…GLVA, LALV…VAIA, AAAG…GLGI, and LLHV…AVLI. His277 is a heme binding site. His338 lines the heme pocket.

Belongs to the COX15/CtaA family. Type 2 subfamily. Interacts with CtaB. Requires heme b as cofactor.

The protein localises to the cell membrane. It carries out the reaction Fe(II)-heme o + 2 A + H2O = Fe(II)-heme a + 2 AH2. It participates in porphyrin-containing compound metabolism; heme A biosynthesis; heme A from heme O: step 1/1. In terms of biological role, catalyzes the conversion of heme O to heme A by two successive hydroxylations of the methyl group at C8. The first hydroxylation forms heme I, the second hydroxylation results in an unstable dihydroxymethyl group, which spontaneously dehydrates, resulting in the formyl group of heme A. The sequence is that of Heme A synthase from Methylorubrum extorquens (strain PA1) (Methylobacterium extorquens).